The sequence spans 128 residues: Fluoride-specific ion channel FluC 1 (128 aa).

Transmembrane regions (helical) follow at residues valine 10–phenylalanine 30, glycine 32–leucine 52, alanine 59–phenylalanine 79, and phenylalanine 93–glycine 113. Na(+) contacts are provided by glycine 71 and threonine 74.

It belongs to the fluoride channel Fluc/FEX (TC 1.A.43) family.

Its subcellular location is the cell membrane. It carries out the reaction fluoride(in) = fluoride(out). With respect to regulation, na(+) is not transported, but it plays an essential structural role and its presence is essential for fluoride channel function. Functionally, fluoride-specific ion channel. Important for reducing fluoride concentration in the cell, thus reducing its toxicity. The chain is Fluoride-specific ion channel FluC 1 from Lactobacillus delbrueckii subsp. bulgaricus (strain ATCC 11842 / DSM 20081 / BCRC 10696 / JCM 1002 / NBRC 13953 / NCIMB 11778 / NCTC 12712 / WDCM 00102 / Lb 14).